Reading from the N-terminus, the 151-residue chain is Small ribosomal subunit protein uS15y (151 aa).

This sequence belongs to the universal ribosomal protein uS15 family.

This is Small ribosomal subunit protein uS15y from Oryza sativa subsp. japonica (Rice).